We begin with the raw amino-acid sequence, 437 residues long: MGRRMRGAAATAGLWLLALGSLLALWGGLLPPRTELPASRPPEDRLPRRPARSGGPAPAPRFPLPPPLAWDARGGSLKTFRALLTLAAGADGPPRQSRSEPRWHVSARQPRPEESAAVHGGVFWSRGLEEQVPPGFSEAQAAAWLEAARGARMVALERGGCGRSSNRLARFADGTRACVRYGINPEQIQGEALSYYLARLLGLQRHVPPLALARVEARGAQWAQVQEELRAAHWTEGSVVSLTRWLPNLTDVVVPAPWRSEDGRLRPLRDAGGELANLSQAELVDLVQWTDLILFDYLTANFDRLVSNLFSLQWDPRVMQRATSNLHRGPGGALVFLDNEAGLVHGYRVAGMWDKYNEPLLQSVCVFRERTARRVLELHRGQDAAARLLRLYRRHEPRFPELAALADPHAQLLQRRLDFLAKHILHCKAKYGRRSGT.

A signal peptide spans 1 to 24 (MGRRMRGAAATAGLWLLALGSLLA). 2 disordered regions span residues 33 to 66 (RTEL…PLPP) and 88 to 116 (AGAD…EESA). Residues 57–66 (APAPRFPLPP) are compositionally biased toward pro residues. The N-linked (GlcNAc...) asparagine glycan is linked to N248.

The protein belongs to the FJX1/FJ family. Post-translationally, glycosylated. Undergoes proteolytic cleavage.

It localises to the secreted. In terms of biological role, acts as an inhibitor of dendrite extension and branching. The chain is Four-jointed box protein 1 (FJX1) from Homo sapiens (Human).